Here is a 360-residue protein sequence, read N- to C-terminus: Dual-specificity RNA methyltransferase RlmN (360 aa).

E89 functions as the Proton acceptor in the catalytic mechanism. Positions 95 to 330 (DSGRGTLCVS…TRVTRGQDID (236 aa)) constitute a Radical SAM core domain. Residues C102 and C333 are joined by a disulfide bond. [4Fe-4S] cluster-binding residues include C109, C113, and C116. S-adenosyl-L-methionine contacts are provided by residues 159 to 160 (GE), S191, 213 to 215 (SLH), and N290. Catalysis depends on C333, which acts as the S-methylcysteine intermediate.

This sequence belongs to the radical SAM superfamily. RlmN family. Requires [4Fe-4S] cluster as cofactor.

It localises to the cytoplasm. The catalysed reaction is adenosine(2503) in 23S rRNA + 2 reduced [2Fe-2S]-[ferredoxin] + 2 S-adenosyl-L-methionine = 2-methyladenosine(2503) in 23S rRNA + 5'-deoxyadenosine + L-methionine + 2 oxidized [2Fe-2S]-[ferredoxin] + S-adenosyl-L-homocysteine. It catalyses the reaction adenosine(37) in tRNA + 2 reduced [2Fe-2S]-[ferredoxin] + 2 S-adenosyl-L-methionine = 2-methyladenosine(37) in tRNA + 5'-deoxyadenosine + L-methionine + 2 oxidized [2Fe-2S]-[ferredoxin] + S-adenosyl-L-homocysteine. Functionally, specifically methylates position 2 of adenine 2503 in 23S rRNA and position 2 of adenine 37 in tRNAs. m2A2503 modification seems to play a crucial role in the proofreading step occurring at the peptidyl transferase center and thus would serve to optimize ribosomal fidelity. The polypeptide is Dual-specificity RNA methyltransferase RlmN (Alkalilimnicola ehrlichii (strain ATCC BAA-1101 / DSM 17681 / MLHE-1)).